The sequence spans 477 residues: Shikimate biosynthesis protein AroDE (477 aa).

Positions 1-209 (MLCATVSGPS…LEELLSYNYS (209 aa)) are 3-dehydroquinate dehydratase. 3-dehydroquinate is bound by residues Ser21, 29–31 (ELR), and 56–58 (TFR). The Proton donor/acceptor; for 3-dehydroquinate dehydratase activity role is filled by His111. Lys134 serves as the catalytic Schiff-base intermediate with substrate; for 3-dehydroquinate dehydratase activity. 3-dehydroquinate contacts are provided by Arg172 and Gln197. Residues 210 to 477 (KLSEKSHIYG…NYVKNFMAKV (268 aa)) are shikimate 5-dehydrogenase. 228–230 (SIS) contributes to the shikimate binding site. Lys279 functions as the Proton acceptor; for shikimate dehydrogenase activity in the catalytic mechanism. Shikimate-binding residues include Asn300 and Asp315. NADP(+) is bound by residues 339 to 343 (GAGGA), 362 to 364 (NRT), and Gly438. Gln445 is a binding site for shikimate.

It in the N-terminal section; belongs to the type-I 3-dehydroquinase family. This sequence in the C-terminal section; belongs to the shikimate dehydrogenase family.

The catalysed reaction is 3-dehydroquinate = 3-dehydroshikimate + H2O. It catalyses the reaction shikimate + NADP(+) = 3-dehydroshikimate + NADPH + H(+). It participates in metabolic intermediate biosynthesis; chorismate biosynthesis; chorismate from D-erythrose 4-phosphate and phosphoenolpyruvate: step 3/7. Its pathway is metabolic intermediate biosynthesis; chorismate biosynthesis; chorismate from D-erythrose 4-phosphate and phosphoenolpyruvate: step 4/7. In terms of biological role, bifunctional enzyme that catalyzes two sequential steps of the aromatic amino acids biosynthetic pathway. In the first reaction, the AroD domain catalyzes the cis-dehydration of 3-dehydroquinate (DHQ) and introduces the first double bond of the aromatic ring to yield 3-dehydroshikimate; in the second reaction, the AroE domain catalyzes the reversible NADPH linked reduction of 3-dehydroshikimate (DHSA) to yield shikimate (SA). The protein is Shikimate biosynthesis protein AroDE of Chlamydia pneumoniae (Chlamydophila pneumoniae).